An 85-amino-acid chain; its full sequence is Large ribosomal subunit protein bL27 (85 aa).

A disordered region spans residues 1–21; sequence MAHKKAGGSTRNGRDSESKRL.

Belongs to the bacterial ribosomal protein bL27 family.

In Ectopseudomonas mendocina (strain ymp) (Pseudomonas mendocina), this protein is Large ribosomal subunit protein bL27.